The sequence spans 899 residues: Toll-like receptor 4 (899 aa).

A signal peptide spans 1–46 (MCPLQIHVLHLIQGNQKNRKGKYVNMTRQLWYILPLLFLLCHCVTS). N-linked (GlcNAc...) asparagine glycans are attached at residues asparagine 25, asparagine 75, asparagine 83, and asparagine 93. Topologically, residues 47–702 (ERRCYFSKIS…LERNCRSYTA (656 aa)) are extracellular. LRR repeat units lie at residues 83–103 (NESV…PDLP), 104–126 (RSLL…AFAR), 128–150 (QNLT…LTAG), 155–179 (LTRL…VLSD), 181–202 (VSLN…MRKI), 203–229 (HALK…YFQN), and 230–253 (VHGI…TFSY). Asparagine 129, asparagine 137, asparagine 146, and asparagine 168 each carry an N-linked (GlcNAc...) asparagine glycan. 4 N-linked (GlcNAc...) asparagine glycosylation sites follow: asparagine 237, asparagine 256, asparagine 275, and asparagine 313. 4 LRR repeats span residues 257-282 (LTHL…DLKN), 313-336 (NTSL…VLMY), 338-360 (PKTL…ALET), and 363-386 (LVNL…IFSN). N-linked (GlcNAc...) asparagine glycans are attached at residues asparagine 388, asparagine 432, and asparagine 463. LRR repeat units lie at residues 468 to 493 (HYPL…VFYD), 501 to 524 (LEGL…FFDY), 526 to 549 (TGLK…EKGE), 554 to 577 (LLKL…ILRN), 579 to 601 (ISLE…LKHI), 602 to 624 (KGLR…VMRE), and 631 to 654 (SSNL…HFLR). An N-linked (GlcNAc...) asparagine glycan is attached at asparagine 516. Residues asparagine 633, asparagine 637, and asparagine 668 are each glycosylated (N-linked (GlcNAc...) asparagine). A helical transmembrane segment spans residues 703–723 (VIVLFSCVFVILLTVIVCGVV). Residues 724–899 (YRYRWKLRYL…WRKLRDPISM (176 aa)) lie on the Cytoplasmic side of the membrane. The TIR domain maps to 756–897 (YEFDAFISYA…IFWRKLRDPI (142 aa)).

The protein belongs to the Toll-like receptor family. In terms of tissue distribution, expressed in all tissues tested. The highest expression is in the hepatopancreas, with moderate expression in the gills, and low expression in the gonads, adductor muscle, hemocytes, and mantle.

It localises to the cell membrane. May be involved in the innate immune response. This Pinctada imbricata (Atlantic pearl-oyster) protein is Toll-like receptor 4.